Here is a 219-residue protein sequence, read N- to C-terminus: Octanoyltransferase (219 aa).

The BPL/LPL catalytic domain occupies 31–206; it reads TASADEIWLV…ECLRLMKASA (176 aa). Substrate contacts are provided by residues 70-77, 137-139, and 150-152; these read RGGQVTFH, SLG, and GLA. The active-site Acyl-thioester intermediate is the Cys-168.

It belongs to the LipB family.

The protein localises to the cytoplasm. It catalyses the reaction octanoyl-[ACP] + L-lysyl-[protein] = N(6)-octanoyl-L-lysyl-[protein] + holo-[ACP] + H(+). It functions in the pathway protein modification; protein lipoylation via endogenous pathway; protein N(6)-(lipoyl)lysine from octanoyl-[acyl-carrier-protein]: step 1/2. Catalyzes the transfer of endogenously produced octanoic acid from octanoyl-acyl-carrier-protein onto the lipoyl domains of lipoate-dependent enzymes. Lipoyl-ACP can also act as a substrate although octanoyl-ACP is likely to be the physiological substrate. The chain is Octanoyltransferase from Sodalis glossinidius (strain morsitans).